The sequence spans 747 residues: MSLIMFGRTLGEESVRYFERLKRRRDERFGTLESPTPCSTRQGSLGNATQIPFLNFAIDVTRRHQAVIPGIGTLHNCCEYIPLFSATARRAMFGAFLSSTGYNCTPNVVLKPWRYSVNANVSPELKKAVSSVQFYEYSPEEAAPHRNAYSGVMNTFRAFSLSDSFCQLSTFTQRFSYLVETSFESIEECGSHGKRAKVDVPIYGRYKGTLELFQKMILMHTTHFISSVLLGDHADRVDCFLRTVFNTPSVSDSVLEHFKQKSTVFLVPRRHGKTWFLVPLIALVMATFRGIKVGYTAHIRKATEPVFEGIKSRLEQWFGANYVDHVKGESITFSFTDGSYSTAVFASSHNTNGIRGQDFNLLFVDEANFIRPDAVQTIVGFLNQTNCKIIFVSSTNTGKASTSFLYNLRGSSDQLLNVVTYVCDDHMPRVLAHSDVTACSCYVLNKPVFITMDGAMRRTADLFMADSFVQEIVGGRKQNSGGVGFDRPLFTKTARERFILYRPSTVANCAILSSVLYVYVDPAFTSNTRASGTGVAIVGRYKSDWIIFGLEHFFLRALTGTSSSEIGRCVTQCLGHILALHPNTFTNVHVSIEGNSSQDSAVAISLAIAQQFAVLEKGNVLSSAPVLLFYHSIPPGCSVAYPFFLLQKQKTPAVDYFVKRFNSGNIIASQELVSLTVKLGVDPVEYLCKQLDNLTEVIKGGMGNLDTKTYTGKGTTGTMSDDLMVALIMSVYIGSSCIPDSVFMPIK.

A Nuclear localization signal motif is present at residues 194–198 (KRAKV). A Walker A motif motif is present at residues 267–274 (VPRRHGKT). Positions 361-366 (LLFVDE) match the Walker B motif motif. The active-site For ATPase activity is the glutamate 366. Catalysis depends on for nuclease activity residues aspartate 521, glutamate 593, and aspartate 722.

This sequence belongs to the herpesviridae TRM3 protein family. In terms of assembly, interacts with the terminase subunits TRM1 and TRM2. Interacts with portal protein.

It localises to the host nucleus. Its function is as follows. Component of the molecular motor that translocates viral genomic DNA in empty capsid during DNA packaging. Forms a tripartite terminase complex together with TRM1 and TRM2 in the host cytoplasm. Once the complex reaches the host nucleus, it interacts with the capsid portal vertex. This portal forms a ring in which genomic DNA is translocated into the capsid. TRM3 carries an RNase H-like nuclease activity that plays an important role for the cleavage of concatemeric viral DNA into unit length genomes. In Homo sapiens (Human), this protein is Tripartite terminase subunit 3.